A 292-amino-acid polypeptide reads, in one-letter code: Ribosomal RNA small subunit methyltransferase A (292 aa).

Residues Asn-29, Leu-31, Gly-56, Glu-77, Asp-102, and Asn-127 each contribute to the S-adenosyl-L-methionine site.

Belongs to the class I-like SAM-binding methyltransferase superfamily. rRNA adenine N(6)-methyltransferase family. RsmA subfamily.

Its subcellular location is the cytoplasm. It carries out the reaction adenosine(1518)/adenosine(1519) in 16S rRNA + 4 S-adenosyl-L-methionine = N(6)-dimethyladenosine(1518)/N(6)-dimethyladenosine(1519) in 16S rRNA + 4 S-adenosyl-L-homocysteine + 4 H(+). In terms of biological role, specifically dimethylates two adjacent adenosines (A1518 and A1519) in the loop of a conserved hairpin near the 3'-end of 16S rRNA in the 30S particle. May play a critical role in biogenesis of 30S subunits. In Bacillus pumilus (strain SAFR-032), this protein is Ribosomal RNA small subunit methyltransferase A.